We begin with the raw amino-acid sequence, 627 residues long: Membrane protein insertase YidC (627 aa).

A helical membrane pass occupies residues 8–28 (LFLALILSMGIWMGVNYFFFP). A compositionally biased stretch (polar residues) spans 33–57 (KKNTETKQTQSDKTSENTKQQITSG). A disordered region spans residues 33–68 (KKNTETKQTQSDKTSENTKQQITSGKTKESNSADPV). Basic and acidic residues predominate over residues 58–68 (KTKESNSADPV). The next 4 membrane-spanning stretches (helical) occupy residues 417 to 437 (FTIP…KLVF), 488 to 508 (VGGC…YTAF), 536 to 556 (AIPY…LMVG), and 575 to 595 (MLMY…PSGV).

Belongs to the OXA1/ALB3/YidC family. Type 1 subfamily. As to quaternary structure, interacts with the Sec translocase complex via SecD. Specifically interacts with transmembrane segments of nascent integral membrane proteins during membrane integration.

Its subcellular location is the cell inner membrane. Its function is as follows. Required for the insertion and/or proper folding and/or complex formation of integral membrane proteins into the membrane. Involved in integration of membrane proteins that insert both dependently and independently of the Sec translocase complex, as well as at least some lipoproteins. Aids folding of multispanning membrane proteins. This is Membrane protein insertase YidC from Leptospira interrogans serogroup Icterohaemorrhagiae serovar Lai (strain 56601).